The sequence spans 61 residues: Defensin BmKDfsin2 (61 aa).

An N-terminal signal peptide occupies residues 1–24; that stretch reads METIVLLFLLALVFCTLEMGMVEA. 3 disulfide bridges follow: Cys28/Cys49, Cys35/Cys57, and Cys39/Cys59.

The protein belongs to the invertebrate defensin family. Type 2 subfamily. As to expression, highly expressed in non-venom gland (hemolymph) and moderately expressed in venom gland.

The protein localises to the secreted. Antibacterial peptide active against Gram-positive bacteria, but not on Gram-negative bacteria. Also has weak blocking activity on Kv1.1/KCNA1, Kv1.2/KCNA2, Kv1.3/KCNA3, KCa3.1/KCNN4/IK, KCa2.3/KCNN3/SK3 and Kv11.1/KCNH2/ERG1 channels (tested at 1 uM). It inhibits potassium channel current by interacting with the pore region. This is Defensin BmKDfsin2 from Olivierus martensii (Manchurian scorpion).